A 322-amino-acid polypeptide reads, in one-letter code: MQRLAPALRQDNVPLDLISLIKTILAATKEISFRVSQGHLGDVMGSTLDENIQGEVQKQLDVVANELFKDILLESGFVKAISSEEEDHSVAGDENGKYIVSFDPLDGSSNIDINSLIGTIFSIHEAPKDIAAGDDDMFKQAGDKQVCAGYVLYGPSTMLVMTTGSGTHFYVLDRTHGGFLLVERNVQVPADTQEFAVNMSNQRFWQAPMQNYISDLLAGDTGPREKNFNMRWIAAMVGDIHRVLCRGGIFTYPADSRKPEQPYKLRLMYEANPMAFLLEQAGGLAMTSEGRIMDIEPNSIHQRVEVIMGSKNEVEKCLSYYN.

Residues Glu-84, Asp-103, Leu-105, and Asp-106 each coordinate Mg(2+). Substrate contacts are provided by residues 106 to 109, Asn-198, and Lys-264; that span reads DGSS. Mg(2+) is bound at residue Glu-270.

It belongs to the FBPase class 1 family. Homotetramer. The cofactor is Mg(2+).

It localises to the cytoplasm. It catalyses the reaction beta-D-fructose 1,6-bisphosphate + H2O = beta-D-fructose 6-phosphate + phosphate. It functions in the pathway carbohydrate biosynthesis; gluconeogenesis. The sequence is that of Fructose-1,6-bisphosphatase class 1 from Colwellia psychrerythraea (strain 34H / ATCC BAA-681) (Vibrio psychroerythus).